Consider the following 264-residue polypeptide: 3-methyl-2-oxobutanoate hydroxymethyltransferase (264 aa).

Mg(2+) is bound by residues aspartate 45 and aspartate 84. 3-methyl-2-oxobutanoate is bound by residues 45–46 (DS), aspartate 84, and lysine 112. Glutamate 114 is a Mg(2+) binding site. Glutamate 181 (proton acceptor) is an active-site residue.

It belongs to the PanB family. In terms of assembly, homodecamer; pentamer of dimers. Mg(2+) serves as cofactor.

It is found in the cytoplasm. The enzyme catalyses 3-methyl-2-oxobutanoate + (6R)-5,10-methylene-5,6,7,8-tetrahydrofolate + H2O = 2-dehydropantoate + (6S)-5,6,7,8-tetrahydrofolate. It participates in cofactor biosynthesis; (R)-pantothenate biosynthesis; (R)-pantoate from 3-methyl-2-oxobutanoate: step 1/2. Its function is as follows. Catalyzes the reversible reaction in which hydroxymethyl group from 5,10-methylenetetrahydrofolate is transferred onto alpha-ketoisovalerate to form ketopantoate. This is 3-methyl-2-oxobutanoate hydroxymethyltransferase from Shewanella amazonensis (strain ATCC BAA-1098 / SB2B).